The chain runs to 732 residues: Protein kinase YpkA (732 aa).

One can recognise a Protein kinase domain in the interval 136–408 (VAETDKFAEG…SNEARLHEFL (273 aa)). Residues 142–150 (FAEGESHIS) and Lys163 contribute to the ATP site. Asp270 acts as the Proton acceptor in catalysis.

Belongs to the protein kinase superfamily. Ser/Thr protein kinase family.

The protein localises to the secreted. It carries out the reaction L-seryl-[protein] + ATP = O-phospho-L-seryl-[protein] + ADP + H(+). The enzyme catalyses L-threonyl-[protein] + ATP = O-phospho-L-threonyl-[protein] + ADP + H(+). Functionally, acts as a virulence determinant. The chain is Protein kinase YpkA (ypkA) from Yersinia pestis.